The following is a 614-amino-acid chain: Sodium- and chloride-dependent betaine transporter (614 aa).

Residues 1-44 (MDGKVAVQECGPPAVSWVPEEGEKLDQEDEDQVKDRGQWTNKME) lie on the Cytoplasmic side of the membrane. A run of 3 helical transmembrane segments spans residues 45 to 65 (FVLS…FPYL), 73 to 92 (AFFI…VFFL), and 117 to 137 (GIGL…IIIL). The Extracellular portion of the chain corresponds to 138-210 (AWALFYLFSS…SGIHDLGSLR (73 aa)). A disulfide bridge links cysteine 157 with cysteine 166. N-linked (GlcNAc...) asparagine glycans are attached at residues asparagine 171 and asparagine 183. Transmembrane regions (helical) follow at residues 211–229 (WELA…FCIW), 238–255 (VVYF…ILLI), 291–308 (IFFS…LGSY), 320–341 (IALC…FSIL), 374–393 (MPLS…FLGL), 423–441 (LLIL…FLVT), 458–478 (GICL…VYGA), 499–518 (ISWL…FSLS), and 538–556 (IGWF…FVVI). At 557–614 (TLLKTRGPFRKRLRQLITPDSSLPQPKQHPCLDGSAGRNFGPSPTREGLIAGEKETHL) the chain is on the cytoplasmic side. Residues 576–614 (DSSLPQPKQHPCLDGSAGRNFGPSPTREGLIAGEKETHL) are disordered.

Belongs to the sodium:neurotransmitter symporter (SNF) (TC 2.A.22) family. SLC6A12 subfamily. Interacts with LIN7C. In terms of tissue distribution, expressed in kidney, liver, heart, skeletal muscle, placenta, and a widespread distribution in the brain.

The protein resides in the basolateral cell membrane. It is found in the cell membrane. It carries out the reaction 4-aminobutanoate(out) + chloride(out) + 3 Na(+)(out) = 4-aminobutanoate(in) + chloride(in) + 3 Na(+)(in). The enzyme catalyses glycine betaine(out) + 2 chloride(out) + 3 Na(+)(out) = glycine betaine(in) + 2 chloride(in) + 3 Na(+)(in). In terms of biological role, transporter that mediates cellular uptake of betaine and GABA in a sodium- and chloride-dependent process. May have a role in regulation of GABAergic transmission in the brain through the reuptake of GABA into presynaptic terminals, as well as in osmotic regulation. Probably also involved in renal and hepatic osmotic regulation. This Homo sapiens (Human) protein is Sodium- and chloride-dependent betaine transporter.